Here is a 100-residue protein sequence, read N- to C-terminus: Urease subunit gamma (100 aa).

This sequence belongs to the urease gamma subunit family. Heterotrimer of UreA (gamma), UreB (beta) and UreC (alpha) subunits. Three heterotrimers associate to form the active enzyme.

Its subcellular location is the cytoplasm. It catalyses the reaction urea + 2 H2O + H(+) = hydrogencarbonate + 2 NH4(+). It functions in the pathway nitrogen metabolism; urea degradation; CO(2) and NH(3) from urea (urease route): step 1/1. In Thermosynechococcus vestitus (strain NIES-2133 / IAM M-273 / BP-1), this protein is Urease subunit gamma.